Reading from the N-terminus, the 214-residue chain is Adenylate kinase (214 aa).

Residue 10–15 (GAGKGT) participates in ATP binding. The interval 30–59 (STGDMLRSAVKAGTELGLKAKALMDHGKLV) is NMP. Residues Thr-31, Arg-36, 57–59 (KLV), 85–88 (GFPR), and Gln-92 each bind AMP. Residues 122–159 (GRRIHAPSGRVYHIKFNPPVVENKDDVTGEELTVRKDD) are LID. ATP-binding positions include Arg-123 and 132–133 (VY). AMP-binding residues include Arg-156 and Arg-167. ATP is bound at residue Arg-200.

It belongs to the adenylate kinase family. As to quaternary structure, monomer.

The protein localises to the cytoplasm. It carries out the reaction AMP + ATP = 2 ADP. The protein operates within purine metabolism; AMP biosynthesis via salvage pathway; AMP from ADP: step 1/1. In terms of biological role, catalyzes the reversible transfer of the terminal phosphate group between ATP and AMP. Plays an important role in cellular energy homeostasis and in adenine nucleotide metabolism. In Photorhabdus laumondii subsp. laumondii (strain DSM 15139 / CIP 105565 / TT01) (Photorhabdus luminescens subsp. laumondii), this protein is Adenylate kinase.